Here is a 453-residue protein sequence, read N- to C-terminus: Signal transduction histidine-protein kinase ArlS (453 aa).

2 consecutive transmembrane segments (helical) span residues isoleucine 14–leucine 34 and phenylalanine 157–phenylalanine 177. An HAMP domain is found at threonine 179 to asparagine 232. The Histidine kinase domain maps to aspartate 240–lysine 453. Histidine 243 carries the phosphohistidine; by autocatalysis modification.

Post-translationally, autophosphorylated.

The protein localises to the cell membrane. The enzyme catalyses ATP + protein L-histidine = ADP + protein N-phospho-L-histidine.. Functionally, member of the two-component regulatory system ArlS/ArlR. ArlS probably functions as a sensor protein kinase which is autophosphorylated at a histidine residue and transfers its phosphate group to ArlR. The polypeptide is Signal transduction histidine-protein kinase ArlS (arlS) (Staphylococcus haemolyticus (strain JCSC1435)).